Consider the following 186-residue polypeptide: dCTP deaminase (186 aa).

Residue 106–111 coordinates dCTP; sequence KSTYAR. The Proton donor/acceptor role is filled by E132. Positions 151, 166, and 176 each coordinate dCTP.

It belongs to the dCTP deaminase family. As to quaternary structure, homotrimer.

It catalyses the reaction dCTP + H2O + H(+) = dUTP + NH4(+). It functions in the pathway pyrimidine metabolism; dUMP biosynthesis; dUMP from dCTP (dUTP route): step 1/2. Functionally, catalyzes the deamination of dCTP to dUTP. The chain is dCTP deaminase from Nautilia profundicola (strain ATCC BAA-1463 / DSM 18972 / AmH).